The sequence spans 418 residues: Histidine--tRNA ligase (418 aa).

This sequence belongs to the class-II aminoacyl-tRNA synthetase family.

It is found in the cytoplasm. The enzyme catalyses tRNA(His) + L-histidine + ATP = L-histidyl-tRNA(His) + AMP + diphosphate + H(+). This is Histidine--tRNA ligase from Methanococcus aeolicus (strain ATCC BAA-1280 / DSM 17508 / OCM 812 / Nankai-3).